The sequence spans 35 residues: Toxin Ado1 (35 aa).

3 disulfide bridges follow: Cys-5–Cys-20, Cys-12–Cys-25, and Cys-19–Cys-32.

Its subcellular location is the secreted. Binds reversibly and blocks P/Q-type voltage-gated calcium channels (Cav). This Agriosphodrus dohrni (Japanese assassin-bug) protein is Toxin Ado1.